The primary structure comprises 173 residues: Shikimate kinase 2 (173 aa).

An ATP-binding site is contributed by 12-17; the sequence is GCGKTT. Residues T16 and D32 each coordinate Mg(2+). Substrate is bound by residues D34, R58, and G79. The tract at residues 112 to 126 is LID domain; the sequence is QASPQAHQRPTLTGR. An ATP-binding site is contributed by R120. R139 contacts substrate. Q155 contributes to the ATP binding site.

As to quaternary structure, monomer. It depends on Mg(2+) as a cofactor.

The protein resides in the cytoplasm. It carries out the reaction shikimate + ATP = 3-phosphoshikimate + ADP + H(+). Its pathway is metabolic intermediate biosynthesis; chorismate biosynthesis; chorismate from D-erythrose 4-phosphate and phosphoenolpyruvate: step 5/7. Its activity is regulated as follows. Inhibited by chloride and sulfate ions. Catalyzes the specific phosphorylation of the 3-hydroxyl group of shikimic acid using ATP as a cosubstrate. The chain is Shikimate kinase 2 (aroL) from Dickeya chrysanthemi (Pectobacterium chrysanthemi).